A 61-amino-acid polypeptide reads, in one-letter code: Small ribosomal subunit protein uS14 (61 aa).

4 residues coordinate Zn(2+): C24, C27, C40, and C43.

The protein belongs to the universal ribosomal protein uS14 family. Zinc-binding uS14 subfamily. In terms of assembly, part of the 30S ribosomal subunit. Contacts proteins S3 and S10. The cofactor is Zn(2+).

In terms of biological role, binds 16S rRNA, required for the assembly of 30S particles and may also be responsible for determining the conformation of the 16S rRNA at the A site. This Petrotoga mobilis (strain DSM 10674 / SJ95) protein is Small ribosomal subunit protein uS14.